The primary structure comprises 289 residues: Putative transmembrane protein ORF289 (289 aa).

The Extracellular portion of the chain corresponds to 1–152 (MAIAKEFLLT…QYTSVVTFRT (152 aa)). A helical membrane pass occupies residues 153–173 (LVAPILYFFALFLVPAWSTVL). Topologically, residues 174 to 234 (KQNPTFPQSQ…NGEVTSTQVN (61 aa)) are cytoplasmic. Residues 235–255 (APIFIGVTTPSGVLVLAYNYY) traverse the membrane as a helical segment. Residues 256–289 (SGTISKYVSLTVTTTYGSATVINQFETKTTGGTT) are Extracellular-facing.

It localises to the host membrane. The polypeptide is Putative transmembrane protein ORF289 (Acidianus sp. F28 (AFV-2)).